The chain runs to 214 residues: Peptide methionine sulfoxide reductase MsrA 2 (214 aa).

Cysteine 45 is an active-site residue.

The protein belongs to the MsrA Met sulfoxide reductase family.

It catalyses the reaction L-methionyl-[protein] + [thioredoxin]-disulfide + H2O = L-methionyl-(S)-S-oxide-[protein] + [thioredoxin]-dithiol. It carries out the reaction [thioredoxin]-disulfide + L-methionine + H2O = L-methionine (S)-S-oxide + [thioredoxin]-dithiol. In terms of biological role, has an important function as a repair enzyme for proteins that have been inactivated by oxidation. Catalyzes the reversible oxidation-reduction of methionine sulfoxide in proteins to methionine. This is Peptide methionine sulfoxide reductase MsrA 2 (msrA2) from Synechocystis sp. (strain ATCC 27184 / PCC 6803 / Kazusa).